We begin with the raw amino-acid sequence, 155 residues long: 2-C-methyl-D-erythritol 2,4-cyclodiphosphate synthase (155 aa).

2 residues coordinate a divalent metal cation: aspartate 8 and histidine 10. 4-CDP-2-C-methyl-D-erythritol 2-phosphate-binding positions include 8–10 (DVH) and 34–35 (HS). Position 42 (histidine 42) interacts with a divalent metal cation. Residues 56 to 58 (DIG), 61 to 65 (FPDTD), 100 to 106 (AQAPKMA), 132 to 135 (TTTE), phenylalanine 139, and arginine 142 each bind 4-CDP-2-C-methyl-D-erythritol 2-phosphate.

Belongs to the IspF family. In terms of assembly, homotrimer. A divalent metal cation is required as a cofactor.

It carries out the reaction 4-CDP-2-C-methyl-D-erythritol 2-phosphate = 2-C-methyl-D-erythritol 2,4-cyclic diphosphate + CMP. The protein operates within isoprenoid biosynthesis; isopentenyl diphosphate biosynthesis via DXP pathway; isopentenyl diphosphate from 1-deoxy-D-xylulose 5-phosphate: step 4/6. Involved in the biosynthesis of isopentenyl diphosphate (IPP) and dimethylallyl diphosphate (DMAPP), two major building blocks of isoprenoid compounds. Catalyzes the conversion of 4-diphosphocytidyl-2-C-methyl-D-erythritol 2-phosphate (CDP-ME2P) to 2-C-methyl-D-erythritol 2,4-cyclodiphosphate (ME-CPP) with a corresponding release of cytidine 5-monophosphate (CMP). The sequence is that of 2-C-methyl-D-erythritol 2,4-cyclodiphosphate synthase from Saccharophagus degradans (strain 2-40 / ATCC 43961 / DSM 17024).